The chain runs to 245 residues: UPF0280 protein UNCMA_16740 (245 aa).

Belongs to the UPF0280 family.

This chain is UPF0280 protein UNCMA_16740, found in Methanocella arvoryzae (strain DSM 22066 / NBRC 105507 / MRE50).